A 542-amino-acid chain; its full sequence is Chaperonin GroEL 5 (542 aa).

ATP is bound by residues 30-33 (TLGP), lysine 51, 87-91 (DGTTT), glycine 415, and aspartate 496.

Belongs to the chaperonin (HSP60) family. In terms of assembly, forms a cylinder of 14 subunits composed of two heptameric rings stacked back-to-back. Interacts with the co-chaperonin GroES.

It localises to the cytoplasm. The enzyme catalyses ATP + H2O + a folded polypeptide = ADP + phosphate + an unfolded polypeptide.. Its function is as follows. Together with its co-chaperonin GroES, plays an essential role in assisting protein folding. The GroEL-GroES system forms a nano-cage that allows encapsulation of the non-native substrate proteins and provides a physical environment optimized to promote and accelerate protein folding. This chain is Chaperonin GroEL 5, found in Rhizobium meliloti (strain 1021) (Ensifer meliloti).